Here is a 149-residue protein sequence, read N- to C-terminus: Transcriptional repressor NrdR (149 aa).

The segment at 3 to 34 (CPFCSAVDTKVIDSRLVGEGTQVRRRRQCVIC) is a zinc-finger region. The ATP-cone domain occupies 49-139 (PRVIKSNDVR…VYRSFEDIRE (91 aa)).

Belongs to the NrdR family. Requires Zn(2+) as cofactor.

Its function is as follows. Negatively regulates transcription of bacterial ribonucleotide reductase nrd genes and operons by binding to NrdR-boxes. The chain is Transcriptional repressor NrdR from Sodalis glossinidius (strain morsitans).